We begin with the raw amino-acid sequence, 858 residues long: Leucine--tRNA ligase (858 aa).

The 'HIGH' region motif lies at 42–52 (PYPSGRLHMGH). The 'KMSKS' region motif lies at 618–622 (KMSKS). Lysine 621 is an ATP binding site.

It belongs to the class-I aminoacyl-tRNA synthetase family.

It is found in the cytoplasm. The enzyme catalyses tRNA(Leu) + L-leucine + ATP = L-leucyl-tRNA(Leu) + AMP + diphosphate. This is Leucine--tRNA ligase from Aliivibrio fischeri (strain ATCC 700601 / ES114) (Vibrio fischeri).